The primary structure comprises 864 residues: Leucine--tRNA ligase (864 aa).

The 'HIGH' region motif lies at 42 to 52; sequence PYPSGKLHMGH. Residues 624 to 628 carry the 'KMSKS' region motif; sequence KMSKS. Lys-627 lines the ATP pocket.

It belongs to the class-I aminoacyl-tRNA synthetase family.

Its subcellular location is the cytoplasm. The catalysed reaction is tRNA(Leu) + L-leucine + ATP = L-leucyl-tRNA(Leu) + AMP + diphosphate. In Burkholderia mallei (strain ATCC 23344), this protein is Leucine--tRNA ligase.